Consider the following 192-residue polypeptide: Thymidine kinase (192 aa).

Residues Ser-9–Ser-16 and Asp-87–Gln-90 each bind ATP. The Proton acceptor role is filled by Glu-88. The Zn(2+) site is built by Cys-145, Cys-147, Cys-182, and His-185.

Belongs to the thymidine kinase family. In terms of assembly, homotetramer.

It localises to the cytoplasm. It carries out the reaction thymidine + ATP = dTMP + ADP + H(+). The polypeptide is Thymidine kinase (Pasteurella multocida (strain Pm70)).